We begin with the raw amino-acid sequence, 275 residues long: Large ribosomal subunit protein uL2 (275 aa).

The interval 223 to 260 (VAMNPVDHPHGGGEGRTSGGRHPVSPWGLPTKGYKTRS) is disordered.

This sequence belongs to the universal ribosomal protein uL2 family. As to quaternary structure, part of the 50S ribosomal subunit. Forms a bridge to the 30S subunit in the 70S ribosome.

Functionally, one of the primary rRNA binding proteins. Required for association of the 30S and 50S subunits to form the 70S ribosome, for tRNA binding and peptide bond formation. It has been suggested to have peptidyltransferase activity; this is somewhat controversial. Makes several contacts with the 16S rRNA in the 70S ribosome. This Legionella pneumophila (strain Paris) protein is Large ribosomal subunit protein uL2.